Reading from the N-terminus, the 118-residue chain is Large ribosomal subunit protein bL20 (118 aa).

The protein belongs to the bacterial ribosomal protein bL20 family.

Functionally, binds directly to 23S ribosomal RNA and is necessary for the in vitro assembly process of the 50S ribosomal subunit. It is not involved in the protein synthesizing functions of that subunit. The sequence is that of Large ribosomal subunit protein bL20 from Psychrobacter arcticus (strain DSM 17307 / VKM B-2377 / 273-4).